The following is a 317-amino-acid chain: Beta-ketoacyl-[acyl-carrier-protein] synthase III (317 aa).

Catalysis depends on residues Cys112 and His244. Residues 245–249 (QANLR) form an ACP-binding region. The active site involves Asn274.

Belongs to the thiolase-like superfamily. FabH family. As to quaternary structure, homodimer.

It is found in the cytoplasm. It carries out the reaction malonyl-[ACP] + acetyl-CoA + H(+) = 3-oxobutanoyl-[ACP] + CO2 + CoA. The protein operates within lipid metabolism; fatty acid biosynthesis. Functionally, catalyzes the condensation reaction of fatty acid synthesis by the addition to an acyl acceptor of two carbons from malonyl-ACP. Catalyzes the first condensation reaction which initiates fatty acid synthesis and may therefore play a role in governing the total rate of fatty acid production. Possesses both acetoacetyl-ACP synthase and acetyl transacylase activities. Its substrate specificity determines the biosynthesis of branched-chain and/or straight-chain of fatty acids. This is Beta-ketoacyl-[acyl-carrier-protein] synthase III from Pectobacterium atrosepticum (strain SCRI 1043 / ATCC BAA-672) (Erwinia carotovora subsp. atroseptica).